The following is a 219-amino-acid chain: Histone H1.4 (219 aa).

Over residues 1–15 the composition is skewed to low complexity; the sequence is MSETAPAAPAAPAPA. Residues 1 to 41 form a disordered region; it reads MSETAPAAPAAPAPAEKTPIKKKARKAAGGAKRKASGPPVS. Position 2 is an N-acetylserine (serine 2). Position 2 is a phosphoserine (serine 2). Lysine 17 is modified (N6-acetyllysine). At threonine 18 the chain carries Phosphothreonine. Residues 20–35 show a composition bias toward basic residues; that stretch reads IKKKARKAAGGAKRKA. Lysine 26 carries the post-translational modification N6-acetyllysine; alternate. Lysine 26 is modified (N6-methyllysine; alternate). The residue at position 34 (lysine 34) is an N6-(beta-hydroxybutyryl)lysine; alternate. Lysine 34 bears the N6-succinyllysine; alternate mark. Residue serine 36 is modified to Phosphoserine. The region spanning 36 to 109 is the H15 domain; the sequence is SGPPVSELIT…GASGSFKLNK (74 aa). Lysine 52 is modified (N6-(beta-hydroxybutyryl)lysine). At arginine 54 the chain carries Citrulline. 4 positions are modified to N6-(beta-hydroxybutyryl)lysine: lysine 64, lysine 85, lysine 90, and lysine 106. Positions 92-219 are disordered; the sequence is TLVQTKGTGA…KPKKTAAKKK (128 aa). A compositionally biased stretch (basic residues) spans 119-140; it reads KAKKAGAAKAKKPAGAAKKPKK. The residue at position 146 (threonine 146) is a Phosphothreonine. Basic residues-rich tracts occupy residues 149–160 and 168–185; these read KSTKKTPKKAKK and KKAKSPKKAKATKAKKAP. Position 150 is an ADP-ribosylserine (serine 150). A Phosphoserine modification is found at serine 187. The segment covering 192-219 has biased composition (basic residues); sequence RAVKPKAAKPKTSKPKAAKPKKTAAKKK.

Belongs to the histone H1/H5 family. H1 histones are progressively phosphorylated during the cell cycle, becoming maximally phosphorylated during late G2 phase and M phase, and being dephosphorylated sharply thereafter. Post-translationally, acetylated at Lys-26. Deacetylated at Lys-26 by SIRT1. In terms of processing, citrullination at Arg-54 (H1R54ci) by PADI4 takes place within the DNA-binding site of H1 and results in its displacement from chromatin and global chromatin decondensation, thereby promoting pluripotency and stem cell maintenance. ADP-ribosylated on Ser-150 in response to DNA damage.

It localises to the nucleus. It is found in the chromosome. Functionally, histone H1 protein binds to linker DNA between nucleosomes forming the macromolecular structure known as the chromatin fiber. Histones H1 are necessary for the condensation of nucleosome chains into higher-order structured fibers. Also acts as a regulator of individual gene transcription through chromatin remodeling, nucleosome spacing and DNA methylation. The sequence is that of Histone H1.4 from Rattus norvegicus (Rat).